The chain runs to 79 residues: CDC42 small effector protein 1-A (79 aa).

Residues C10 and C11 are each lipidated (S-palmitoyl cysteine). Residues 30-43 form the CRIB domain; sequence IGEPMNFVHLTHVG.

This sequence belongs to the CDC42SE/SPEC family.

Its subcellular location is the cytoplasm. The protein localises to the cytoskeleton. It is found in the cell membrane. In terms of biological role, probably involved in the organization of the actin cytoskeleton by acting downstream of CDC42, inducing actin filament assembly. The chain is CDC42 small effector protein 1-A (cdc42se1-a) from Xenopus laevis (African clawed frog).